A 495-amino-acid polypeptide reads, in one-letter code: Trimethylamine methyltransferase MttB1 (495 aa).

Residue Pyl334 is a non-standard amino acid, pyrrolysine.

This sequence belongs to the trimethylamine methyltransferase family. Can form a complex with MttC.

It catalyses the reaction Co(I)-[trimethylamine-specific corrinoid protein] + trimethylamine + H(+) = methyl-Co(III)-[trimethylamine-specific corrinoid protein] + dimethylamine. The protein operates within one-carbon metabolism; methanogenesis from trimethylamine. Functionally, catalyzes the transfer of a methyl group from trimethylamine to the corrinoid cofactor of MttC. This is Trimethylamine methyltransferase MttB1 (mttB1) from Methanosarcina mazei (strain ATCC BAA-159 / DSM 3647 / Goe1 / Go1 / JCM 11833 / OCM 88) (Methanosarcina frisia).